Reading from the N-terminus, the 146-residue chain is Large ribosomal subunit protein uL15 (146 aa).

The interval 1–65 (MSDIQLNTLK…GQMPLQRRLP (65 aa)) is disordered. Over residues 24-34 (RGIGSGLGKTA) the composition is skewed to gly residues.

The protein belongs to the universal ribosomal protein uL15 family. As to quaternary structure, part of the 50S ribosomal subunit.

In terms of biological role, binds to the 23S rRNA. In Bordetella petrii (strain ATCC BAA-461 / DSM 12804 / CCUG 43448), this protein is Large ribosomal subunit protein uL15.